A 393-amino-acid chain; its full sequence is 1-deoxy-D-xylulose 5-phosphate reductoisomerase (393 aa).

6 residues coordinate NADPH: threonine 10, glycine 11, serine 12, isoleucine 13, glutamine 38, and asparagine 124. Lysine 125 contacts 1-deoxy-D-xylulose 5-phosphate. Glutamate 126 lines the NADPH pocket. Residue aspartate 150 participates in Mn(2+) binding. Residues serine 151, glutamate 152, serine 179, and histidine 202 each coordinate 1-deoxy-D-xylulose 5-phosphate. Residue glutamate 152 coordinates Mn(2+). Glycine 208 contributes to the NADPH binding site. Residues serine 215, asparagine 220, lysine 221, and glutamate 224 each contribute to the 1-deoxy-D-xylulose 5-phosphate site. Glutamate 224 is a Mn(2+) binding site.

This sequence belongs to the DXR family. Mg(2+) serves as cofactor. Requires Mn(2+) as cofactor.

It carries out the reaction 2-C-methyl-D-erythritol 4-phosphate + NADP(+) = 1-deoxy-D-xylulose 5-phosphate + NADPH + H(+). Its pathway is isoprenoid biosynthesis; isopentenyl diphosphate biosynthesis via DXP pathway; isopentenyl diphosphate from 1-deoxy-D-xylulose 5-phosphate: step 1/6. Catalyzes the NADPH-dependent rearrangement and reduction of 1-deoxy-D-xylulose-5-phosphate (DXP) to 2-C-methyl-D-erythritol 4-phosphate (MEP). This is 1-deoxy-D-xylulose 5-phosphate reductoisomerase from Ralstonia nicotianae (strain ATCC BAA-1114 / GMI1000) (Ralstonia solanacearum).